Consider the following 538-residue polypeptide: uncharacterized protein (538 aa).

Positions 1 to 17 (MSFSATILFSPPSGSEA) are cleaved as a signal peptide. The segment at 101 to 131 (RQGKVSIPDEDGESRAHSSPPEEPGPLKESP) is disordered. Residues Lys128 and Lys221 each participate in a glycyl lysine isopeptide (Lys-Gly) (interchain with G-Cter in SUMO2) cross-link. A Phosphoserine modification is found at Ser224. The tract at residues 233-253 (RATPETGPENGTKLPPPRPED) is disordered. Residues Ser285 and Ser428 each carry the phosphoserine modification. The segment at 488-523 (LPPELYNPNFQEEEDEGGDENAPGSPSFDQPHKTCC) is disordered.

It localises to the secreted. This is an uncharacterized protein from Homo sapiens (Human).